The primary structure comprises 298 residues: 4-hydroxy-tetrahydrodipicolinate synthase (298 aa).

T45 serves as a coordination point for pyruvate. The active-site Proton donor/acceptor is the Y133. K161 acts as the Schiff-base intermediate with substrate in catalysis. A pyruvate-binding site is contributed by I203.

Belongs to the DapA family. As to quaternary structure, homotetramer; dimer of dimers.

The protein localises to the cytoplasm. It catalyses the reaction L-aspartate 4-semialdehyde + pyruvate = (2S,4S)-4-hydroxy-2,3,4,5-tetrahydrodipicolinate + H2O + H(+). It functions in the pathway amino-acid biosynthesis; L-lysine biosynthesis via DAP pathway; (S)-tetrahydrodipicolinate from L-aspartate: step 3/4. Functionally, catalyzes the condensation of (S)-aspartate-beta-semialdehyde [(S)-ASA] and pyruvate to 4-hydroxy-tetrahydrodipicolinate (HTPA). In Wigglesworthia glossinidia brevipalpis, this protein is 4-hydroxy-tetrahydrodipicolinate synthase.